The primary structure comprises 304 residues: Rhomboid-like protein 19 (304 aa).

A run of 6 helical transmembrane segments spans residues 23-43 (LVVG…LALI), 58-78 (GYFE…LFMG), 93-113 (FIFV…IALY), 120-140 (VYLY…LVGI), 158-175 (WLPS…FFTL), and 179-198 (AYLP…LRYL). A disordered region spans residues 247 to 304 (SEDHDYSTSGAPLPGSDSAEASRRRERGARALEERLGTERLVPARNKDELQSDGLDNV). The segment covering 266 to 284 (EASRRRERGARALEERLGT) has biased composition (basic and acidic residues).

Belongs to the peptidase S54 family.

It is found in the membrane. Functionally, probable rhomboid-type serine protease that catalyzes intramembrane proteolysis. In Arabidopsis thaliana (Mouse-ear cress), this protein is Rhomboid-like protein 19.